Here is a 428-residue protein sequence, read N- to C-terminus: Elongation factor 1-alpha (428 aa).

Positions 5-217 (KPHVNIVFIG…DQIPEPEKPV (213 aa)) constitute a tr-type G domain. Residues 14–21 (GHVDHGKS) are G1. A GTP-binding site is contributed by 14-21 (GHVDHGKS). Residue Ser-21 coordinates Mg(2+). The segment at 68 to 72 (GITID) is G2. The segment at 89-92 (DAPG) is G3. GTP-binding positions include 89–93 (DAPGH) and 144–147 (NKMD). Positions 144-147 (NKMD) are G4. The tract at residues 181-183 (SAW) is G5.

It belongs to the TRAFAC class translation factor GTPase superfamily. Classic translation factor GTPase family. EF-Tu/EF-1A subfamily.

The protein localises to the cytoplasm. The catalysed reaction is GTP + H2O = GDP + phosphate + H(+). GTP hydrolase that promotes the GTP-dependent binding of aminoacyl-tRNA to the A-site of ribosomes during protein biosynthesis. The chain is Elongation factor 1-alpha from Pyrococcus furiosus (strain ATCC 43587 / DSM 3638 / JCM 8422 / Vc1).